Reading from the N-terminus, the 318-residue chain is TPR repeat-containing protein MJ0940 (318 aa).

TPR repeat units lie at residues 17 to 50 (SLTY…NPDF), 84 to 117 (PVAY…EEKF), 119 to 151 (TAFF…APNF), 152 to 185 (IPAY…KEND), 186 to 219 (TNAI…LNVT), 221 to 254 (IEVI…RPDD), 255 to 288 (ASLW…MPHH), and 289 to 318 (TKAL…ALDR).

This chain is TPR repeat-containing protein MJ0940, found in Methanocaldococcus jannaschii (strain ATCC 43067 / DSM 2661 / JAL-1 / JCM 10045 / NBRC 100440) (Methanococcus jannaschii).